A 259-amino-acid chain; its full sequence is Protein TILLER ANGLE CONTROL 1 (259 aa).

An IGT motif motif is present at residues glycine 56–threonine 62. Disordered stretches follow at residues glutamate 96–histidine 123, serine 206–alanine 226, and glycine 239–alanine 259. Residues alanine 109–proline 119 show a composition bias toward low complexity.

The protein belongs to the TAC family. As to expression, expressed in the basal part of seedlings.

Involved in the regulation of tiller growth angle. Promotes horizontal shoot growth. TAC1 and LAZY1 play opposite functions in the regulation of tiller growth angle. The polypeptide is Protein TILLER ANGLE CONTROL 1 (Oryza sativa subsp. indica (Rice)).